Consider the following 126-residue polypeptide: Large ribosomal subunit protein uL22 (126 aa).

The protein belongs to the universal ribosomal protein uL22 family. Part of the 50S ribosomal subunit.

Its function is as follows. This protein binds specifically to 23S rRNA; its binding is stimulated by other ribosomal proteins, e.g. L4, L17, and L20. It is important during the early stages of 50S assembly. It makes multiple contacts with different domains of the 23S rRNA in the assembled 50S subunit and ribosome. Functionally, the globular domain of the protein is located near the polypeptide exit tunnel on the outside of the subunit, while an extended beta-hairpin is found that lines the wall of the exit tunnel in the center of the 70S ribosome. In Phenylobacterium zucineum (strain HLK1), this protein is Large ribosomal subunit protein uL22.